We begin with the raw amino-acid sequence, 248 residues long: 3-deoxy-manno-octulosonate cytidylyltransferase (248 aa).

The protein belongs to the KdsB family.

It localises to the cytoplasm. The catalysed reaction is 3-deoxy-alpha-D-manno-oct-2-ulosonate + CTP = CMP-3-deoxy-beta-D-manno-octulosonate + diphosphate. It functions in the pathway nucleotide-sugar biosynthesis; CMP-3-deoxy-D-manno-octulosonate biosynthesis; CMP-3-deoxy-D-manno-octulosonate from 3-deoxy-D-manno-octulosonate and CTP: step 1/1. The protein operates within bacterial outer membrane biogenesis; lipopolysaccharide biosynthesis. In terms of biological role, activates KDO (a required 8-carbon sugar) for incorporation into bacterial lipopolysaccharide in Gram-negative bacteria. In Syntrophus aciditrophicus (strain SB), this protein is 3-deoxy-manno-octulosonate cytidylyltransferase.